The following is a 204-amino-acid chain: Thymidylate kinase (204 aa).

ATP is bound at residue 11-18; it reads GLDKSGKT.

Belongs to the thymidylate kinase family.

The enzyme catalyses dTMP + ATP = dTDP + ADP. The protein operates within pyrimidine metabolism; dTTP biosynthesis. The sequence is that of Thymidylate kinase (TMK) from Rabbitpox virus (strain Utrecht) (RPV).